Reading from the N-terminus, the 432-residue chain is Glutamate-1-semialdehyde 2,1-aminomutase 2 (432 aa).

The residue at position 268 (Lys268) is an N6-(pyridoxal phosphate)lysine.

The protein belongs to the class-III pyridoxal-phosphate-dependent aminotransferase family. HemL subfamily. Homodimer. Pyridoxal 5'-phosphate is required as a cofactor.

The protein localises to the cytoplasm. The catalysed reaction is (S)-4-amino-5-oxopentanoate = 5-aminolevulinate. It functions in the pathway porphyrin-containing compound metabolism; protoporphyrin-IX biosynthesis; 5-aminolevulinate from L-glutamyl-tRNA(Glu): step 2/2. This Listeria welshimeri serovar 6b (strain ATCC 35897 / DSM 20650 / CCUG 15529 / CIP 8149 / NCTC 11857 / SLCC 5334 / V8) protein is Glutamate-1-semialdehyde 2,1-aminomutase 2.